Reading from the N-terminus, the 335-residue chain is N-acetylglucosaminyl-phosphatidylinositol de-N-acetylase (335 aa).

Residues 3-23 (SAFTFLSLAIFPLALFIFWTL) traverse the membrane as a helical segment. 2 N-linked (GlcNAc...) asparagine glycosylation sites follow: asparagine 128 and asparagine 153.

This sequence belongs to the PIGL family.

The protein resides in the endoplasmic reticulum membrane. The catalysed reaction is a 6-(N-acetyl-alpha-D-glucosaminyl)-1-(1,2-diacyl-sn-glycero-3-phospho)-1D-myo-inositol + H2O = a 6-(alpha-D-glucosaminyl)-1-(1,2-diacyl-sn-glycero-3-phospho)-1D-myo-inositol + acetate. The protein operates within glycolipid biosynthesis; glycosylphosphatidylinositol-anchor biosynthesis. In terms of biological role, involved in the second step of GPI biosynthesis. De-N-acetylation of N-acetylglucosaminyl-phosphatidylinositol. In Arthroderma benhamiae (strain ATCC MYA-4681 / CBS 112371) (Trichophyton mentagrophytes), this protein is N-acetylglucosaminyl-phosphatidylinositol de-N-acetylase.